A 308-amino-acid polypeptide reads, in one-letter code: tRNA dimethylallyltransferase (308 aa).

An ATP-binding site is contributed by 14–21; it reads GPTASGKT. Position 16-21 (16-21) interacts with substrate; it reads TASGKT. 3 interaction with substrate tRNA regions span residues 39-42, 163-167, and 244-249; these read DSAL, QRLAR, and RCVGYR.

This sequence belongs to the IPP transferase family. Monomer. Requires Mg(2+) as cofactor.

The catalysed reaction is adenosine(37) in tRNA + dimethylallyl diphosphate = N(6)-dimethylallyladenosine(37) in tRNA + diphosphate. Its function is as follows. Catalyzes the transfer of a dimethylallyl group onto the adenine at position 37 in tRNAs that read codons beginning with uridine, leading to the formation of N6-(dimethylallyl)adenosine (i(6)A). The protein is tRNA dimethylallyltransferase of Shewanella piezotolerans (strain WP3 / JCM 13877).